Reading from the N-terminus, the 363-residue chain is NAD(P)H-quinone oxidoreductase subunit 1, chloroplastic (363 aa).

Helical transmembrane passes span 30-50 (LVPI…IVWL), 104-124 (IAVI…HLVL), 127-147 (LGIG…GLLM), 253-273 (FGLF…FVTV), 300-320 (VFGT…FLFI), and 343-363 (FLLP…LLSL).

This sequence belongs to the complex I subunit 1 family. In terms of assembly, NDH is composed of at least 16 different subunits, 5 of which are encoded in the nucleus.

It is found in the plastid. The protein localises to the chloroplast thylakoid membrane. It catalyses the reaction a plastoquinone + NADH + (n+1) H(+)(in) = a plastoquinol + NAD(+) + n H(+)(out). It carries out the reaction a plastoquinone + NADPH + (n+1) H(+)(in) = a plastoquinol + NADP(+) + n H(+)(out). In terms of biological role, NDH shuttles electrons from NAD(P)H:plastoquinone, via FMN and iron-sulfur (Fe-S) centers, to quinones in the photosynthetic chain and possibly in a chloroplast respiratory chain. The immediate electron acceptor for the enzyme in this species is believed to be plastoquinone. Couples the redox reaction to proton translocation, and thus conserves the redox energy in a proton gradient. This chain is NAD(P)H-quinone oxidoreductase subunit 1, chloroplastic, found in Piper cenocladum (Ant piper).